A 680-amino-acid polypeptide reads, in one-letter code: MGKSRTKRFKRPQFSPTGDCQAEAAAAANGTGGEEDDGPAAELLEKLQHPSAEVRECACAGLARLVQQRPALPGLARRDAVRRLGPLLLDPSLAVRETAAGALRNLSACGGFEVCDDMVTKDIMTPLVALLKECSAGLDSNEMSLQEKKDQNRNSIENIANETVNVLWNICECSSRAVSIFNKEGCLEIVLKYLSRFPTNVDLAISVAYCLQTVTEDNPELLKSFSATALNMLESALLSPVSSMESLLLKTLVAGTIWNLKDIIPCKSQAEIINALLKILSEVLGMDAGEMVIQMKEAETQRLKTAAEAEEILENTNGDDLIEDDEMEGISHKRRVRRKTFVSDLLPPTDKELRETIALLTAQQTALEIIVNMCCNEDPSDDEWEELSSSDESDAFMENSFSECGGQLFSPLCLSHEVHTALTNYLIPKKIFEKTAFPNSIAVDLCSRNPTWKPLIRKMNTIQCRALFCLQSLVSLLDVEHLGGAAALQTLAQHLSQLLFSQPDFAKHVDFLEAISSALRALLQTMASKNISQCMTPDQLMTLCKAGIHSSNVGVRVNVVSILGITGSVLAKEDGTLETLKNIGCFLLEVTTKDPSLVVAGEALDALFDVFADGKEAERASIQIKLLSALKEFQPVFKMKIRKEGRGNYSTDQLCVLDNVKMNLRRFIAYQETVEKRLTS.

Basic residues predominate over residues 1 to 11 (MGKSRTKRFKR). The interval 1 to 39 (MGKSRTKRFKRPQFSPTGDCQAEAAAAANGTGGEEDDGP) is disordered. Ser15 is modified (phosphoserine). The segment covering 18–29 (GDCQAEAAAAAN) has biased composition (low complexity). HEAT repeat units follow at residues 38-69 (GPAA…VQQR) and 74-110 (GLAR…SACG). Phosphoserine is present on Ser144. Thr340 carries the post-translational modification Phosphothreonine.

This sequence belongs to the nuclear import and ribosome assembly adapter family. As to quaternary structure, component of a hexameric 5S RNP precursor complex, composed of 5S RNA, RRS1, RPF2/BXDC1, RPL5, RPL11 and HEATR3; this complex acts as a precursor for ribosome assembly.

Plays a role in ribosome biogenesis and in nuclear import of the 60S ribosomal protein L5/large ribosomal subunit protein uL18 (RPL5). Required for proper erythrocyte maturation. This Homo sapiens (Human) protein is HEAT repeat-containing protein 3 (HEATR3).